Consider the following 593-residue polypeptide: Thiol:disulfide interchange protein DsbD (593 aa).

Positions 1 to 21 (MRALLTFFVAGLLVLSSPAMA) are cleaved as a signal peptide. Disulfide bonds link cysteine 130/cysteine 136 and cysteine 207/cysteine 328. Helical transmembrane passes span 193-215 (LLFL…YPIL), 235-257 (LVYV…SAGL), 269-291 (LIGL…TLQL), 318-340 (GAIS…LLYV), 347-369 (LTGG…LVAV), 384-401 (RVKT…IFLL), 408-425 (MWST…FGWL), and 440-462 (SAVG…NYWF). The region spanning 451 to 593 (FASAQPALNY…FLEHIQRISN (143 aa)) is the Thioredoxin domain. The cysteines at positions 508 and 511 are disulfide-linked.

This sequence belongs to the thioredoxin family. DsbD subfamily.

It is found in the cell inner membrane. It carries out the reaction [protein]-dithiol + NAD(+) = [protein]-disulfide + NADH + H(+). The catalysed reaction is [protein]-dithiol + NADP(+) = [protein]-disulfide + NADPH + H(+). In terms of biological role, required to facilitate the formation of correct disulfide bonds in some periplasmic proteins and for the assembly of the periplasmic c-type cytochromes. Acts by transferring electrons from cytoplasmic thioredoxin to the periplasm. This transfer involves a cascade of disulfide bond formation and reduction steps. In Vibrio vulnificus (strain CMCP6), this protein is Thiol:disulfide interchange protein DsbD.